A 670-amino-acid chain; its full sequence is Probable Na(+)/H(+) antiporter nhx-3 (670 aa).

8 helical membrane-spanning segments follow: residues 41–61 (VYVI…FNLM), 73–93 (LLII…LSGV), 97–117 (SHAF…YFMP), 129–149 (LVFS…SLLI), 164–184 (EILV…IAIF), 192–212 (FLFI…VVLY), 235–255 (GLSF…FAIA), and 268–288 (ILAP…AEMV). N-linked (GlcNAc...) asparagine glycosylation occurs at Asn310. The next 4 helical transmembrane spans lie at 325 to 345 (MLAQ…TLTS), 351 to 371 (FIFI…GIIV), 390 to 410 (FILS…VSIP), and 418 to 438 (MFIT…GITI). The disordered stretch occupies residues 648–670 (GDLKGHCGTSRKPKHSMFELRHV).

This sequence belongs to the monovalent cation:proton antiporter 1 (CPA1) transporter (TC 2.A.36) family. Post-translationally, phosphorylated. In terms of tissue distribution, expressed in hypodermal cells of the main body syncytium, ut1 cells of the vulva and the spermathecal junction cell.

Its subcellular location is the endomembrane system. Its function is as follows. Plays a role in epithelial membrane transport processes. The protein is Probable Na(+)/H(+) antiporter nhx-3 (nhx-3) of Caenorhabditis elegans.